A 282-amino-acid polypeptide reads, in one-letter code: S-formylglutathione hydrolase (282 aa).

At Ala-2 the chain carries N-acetylalanine. Position 4 is an N6-succinyllysine (Lys-4). Ser-149 (charge relay system) is an active-site residue. An N6-acetyllysine modification is found at Lys-200. Active-site charge relay system residues include Asp-226 and His-260.

Belongs to the esterase D family. Homodimer.

The protein resides in the cytoplasm. It localises to the cytoplasmic vesicle. It catalyses the reaction S-formylglutathione + H2O = formate + glutathione + H(+). In terms of biological role, serine hydrolase involved in the detoxification of formaldehyde. The polypeptide is S-formylglutathione hydrolase (Esd) (Mus musculus (Mouse)).